Here is a 471-residue protein sequence, read N- to C-terminus: Ubiquitin-conjugating enzyme E2 variant 3 (471 aa).

The UEV domain occupies 2–145 (DVNSEPVKKV…EEEPPLGTKS (144 aa)). Residue 183–211 (GDLGIAAVLSIMAKSCVDKLVLIDIPENS) coordinates NAD(+).

In the N-terminal section; belongs to the ubiquitin-conjugating enzyme family. UEV subfamily. This sequence in the C-terminal section; belongs to the LDH/MDH superfamily. Homodimer.

In terms of biological role, possible negative regulator of polyubiquitination. The polypeptide is Ubiquitin-conjugating enzyme E2 variant 3 (uevld) (Danio rerio (Zebrafish)).